The following is a 422-amino-acid chain: Serine--tRNA ligase (422 aa).

An L-serine-binding site is contributed by T229 to E231. R260–E262 provides a ligand contact to ATP. E283 provides a ligand contact to L-serine. E347–S350 is a binding site for ATP. S383 is an L-serine binding site.

This sequence belongs to the class-II aminoacyl-tRNA synthetase family. Type-1 seryl-tRNA synthetase subfamily. In terms of assembly, homodimer. The tRNA molecule binds across the dimer.

The protein localises to the cytoplasm. It catalyses the reaction tRNA(Ser) + L-serine + ATP = L-seryl-tRNA(Ser) + AMP + diphosphate + H(+). The catalysed reaction is tRNA(Sec) + L-serine + ATP = L-seryl-tRNA(Sec) + AMP + diphosphate + H(+). The protein operates within aminoacyl-tRNA biosynthesis; selenocysteinyl-tRNA(Sec) biosynthesis; L-seryl-tRNA(Sec) from L-serine and tRNA(Sec): step 1/1. Functionally, catalyzes the attachment of serine to tRNA(Ser). Is also able to aminoacylate tRNA(Sec) with serine, to form the misacylated tRNA L-seryl-tRNA(Sec), which will be further converted into selenocysteinyl-tRNA(Sec). This is Serine--tRNA ligase from Geotalea uraniireducens (strain Rf4) (Geobacter uraniireducens).